The chain runs to 312 residues: uncharacterized protein (312 aa).

Belongs to the mimivirus R69 family.

This is an uncharacterized protein from Acanthamoeba polyphaga mimivirus (APMV).